The primary structure comprises 429 residues: Glutamate-1-semialdehyde 2,1-aminomutase 1 (429 aa).

K268 carries the post-translational modification N6-(pyridoxal phosphate)lysine.

It belongs to the class-III pyridoxal-phosphate-dependent aminotransferase family. HemL subfamily. In terms of assembly, homodimer. Requires pyridoxal 5'-phosphate as cofactor.

The protein resides in the cytoplasm. The catalysed reaction is (S)-4-amino-5-oxopentanoate = 5-aminolevulinate. Its pathway is porphyrin-containing compound metabolism; protoporphyrin-IX biosynthesis; 5-aminolevulinate from L-glutamyl-tRNA(Glu): step 2/2. This chain is Glutamate-1-semialdehyde 2,1-aminomutase 1, found in Listeria monocytogenes serotype 4b (strain F2365).